A 1324-amino-acid chain; its full sequence is Structural maintenance of chromosomes protein 4 (1324 aa).

The segment at 1–24 (MSDKGIFRTSSTPSIVDVTPDRGE) is disordered. Thr19 carries the post-translational modification Phosphothreonine; by CDC2. 155–162 (GPNGSGKS) contributes to the ATP binding site. Coiled-coil stretches lie at residues 310–337 (QELSNSDDICAEKESRLKLVLSEKAKLE) and 370–628 (NKKT…KASL). Residues 651 to 764 (NGFFGRLGDL…KNLEQANRIA (114 aa)) form the SMC hinge domain. Coiled-coil stretches lie at residues 825 to 1077 (YRQH…MSNL) and 1297 to 1324 (LSSRLVGIYKTANMTKSVTINNKEILTD).

This sequence belongs to the SMC family. SMC4 subfamily. Forms a heterodimer with cut14/smc2. Component of the condensin complex, which contains the smc2 and smc4 heterodimer, and three non smc subunits that probably regulate the complex: cnd1, cnd2 and cnd3. Interacts with C1739.07. Post-translationally, phosphorylated by CDC2 on Thr-19 at metaphase.

The protein resides in the nucleus. It localises to the cytoplasm. The protein localises to the chromosome. Its function is as follows. Central component of the condensin complex, a complex required for conversion of interphase chromatin into mitotic-like condense chromosomes. The condensin complex probably introduces positive supercoils into relaxed DNA in the presence of type I topoisomerases and converts nicked DNA into positive knotted forms in the presence of type II topoisomerases. This Schizosaccharomyces pombe (strain 972 / ATCC 24843) (Fission yeast) protein is Structural maintenance of chromosomes protein 4 (cut3).